A 420-amino-acid polypeptide reads, in one-letter code: MTVRVLNVWWDGRIVGQFTQDRHGDIGFAYSEAWLDDENTLPLSASLPKRAEPFSRRECRPFFGGLLPEESQRLVTAQALGVSPANDFALLDRLGGDVAGALQLLPEDQEPIEAGPLPDQQPTPLDEAGIVRILDALPTRPLLAGQEGLRLSLAGAQSKVPLVLIDGELALPVSGQATTHILKPPIARFPGTTENEAFVMRLAAAIGLDVAPVEPRSANGRPFLVVERYDRYRDADGVVHRIHQEDFCQALGVPPETKYASEGGPTFKDCFELLRRVSARPATDVLKLLDAAIFNLVVGNADAHGKNFSILYDDQGPKMAPLYDLLSTVAYPDLSPKMAMRIGKRVTLAEMDADGWQTFAKEAGVGLPLVRRRITNLVDSTAEAVARVLEDTSDLYIDSARINHFADSVAGRAKLVRLSI.

The Proton acceptor role is filled by D302.

The protein belongs to the HipA Ser/Thr kinase family.

The sequence is that of Putative kinase Y4mE from Sinorhizobium fredii (strain NBRC 101917 / NGR234).